A 319-amino-acid chain; its full sequence is Coiled-coil domain-containing protein 149 (319 aa).

Coiled coils occupy residues 1–199 (MANQ…RKNS) and 259–286 (IQHQRQTNKILGNRVAELEKKLRTLEVS). Residues 298-318 (VSIGFGSMFFLKYLCLWLIAV) form a helical membrane-spanning segment.

This sequence belongs to the CCDC149 family.

The protein resides in the membrane. This Bos taurus (Bovine) protein is Coiled-coil domain-containing protein 149 (CCDC149).